Consider the following 626-residue polypeptide: Chaperone protein HtpG (626 aa).

An a; substrate-binding region spans residues 1 to 331; sequence MSETVERHEF…TDDLPLNVSR (331 aa). The b stretch occupies residues 332 to 544; sequence EMLQSTPTLQ…GMGPDLQMQR (213 aa). The c stretch occupies residues 545-626; it reads LLRRAGRGFG…GTVAKPAESA (82 aa).

This sequence belongs to the heat shock protein 90 family. In terms of assembly, homodimer.

It is found in the cytoplasm. Its function is as follows. Molecular chaperone. Has ATPase activity. The protein is Chaperone protein HtpG of Methylorubrum populi (strain ATCC BAA-705 / NCIMB 13946 / BJ001) (Methylobacterium populi).